The chain runs to 898 residues: Sodium/hydrogen exchanger 5 (898 aa).

Over 1-3 (MLR) the chain is Cytoplasmic. The chain crosses the membrane as a helical span at residues 4-24 (VALLLLPGLPLAGVGATEEPT). Topologically, residues 25–47 (QEPGPLGEPPGLALFRWQWHEVE) are extracellular. A helical membrane pass occupies residues 48–68 (APYLVALWILVASLAKIVFHL). Residues 69-75 (SRKVTSL) lie on the Cytoplasmic side of the membrane. The helical transmembrane segment at 76–96 (VPESCLLILLGLALGGIVLAV) threads the bilayer. The Extracellular segment spans residues 97-136 (AKKAEYQLEPGTFFLFLLPPIVLDSGYFMPSRLFFDNLGA). A helical membrane pass occupies residues 137 to 157 (ILTYAVVGTLWNAFTTGVALW). Over 158-175 (GLQQAGLVAPRVQAGLLD) the chain is Cytoplasmic. A helical membrane pass occupies residues 176 to 196 (FLLFGSLISAVDPVAVLAVFE). Topologically, residues 197 to 202 (EVHVNE) are extracellular. The N-linked (GlcNAc...) asparagine glycan is linked to Asn-201. The chain crosses the membrane as a helical span at residues 203-223 (TLFIIVFGESLLNDAVTVVLY). The Cytoplasmic portion of the chain corresponds to 224–248 (KVCNSFVEMGSANVQATDYLKGVAS). The helical transmembrane segment at 249-269 (LFVVSLGGAAVGLVFAFLLAL) threads the bilayer. Topologically, residues 270–278 (TTRFTKRVR) are extracellular. The chain crosses the membrane as a helical span at residues 279–299 (IIEPLLVFLLAYAAYLTAEMA). Over 300–333 (SLSAILAVTMCGLGCKKYVEANISHKSRTAVKYT) the chain is Cytoplasmic. Residues 334-354 (MKTLASSAETVIFMLLGISAV) traverse the membrane as a helical segment. The Extracellular portion of the chain corresponds to 355–362 (DSSKWAWD). Residues 363-383 (SGLVLGTLFFILFFRALGVVL) form a helical membrane-spanning segment. Over 384–400 (QTWVLNQFRLVPLDKID) the chain is Cytoplasmic. A helical membrane pass occupies residues 401-421 (QVVMSYGGLRGAVAFALVILL). The Extracellular portion of the chain corresponds to 422–430 (DRTKVPAKD). Residues 431-451 (YFVATTIVVVFFTVIVQGLTI) traverse the membrane as a helical segment. The Cytoplasmic portion of the chain corresponds to 452–898 (KPLVKWLRVK…CIQFNRGGRL (447 aa)). Disordered stretches follow at residues 660 to 692 (TKSK…RDLG) and 801 to 888 (ESLA…NSHW). Positions 662-674 (SKPRPRKTGHKKK) are enriched in basic residues. Residues 856–867 (ESSADIPQQQEL) are compositionally biased toward polar residues.

The protein belongs to the monovalent cation:proton antiporter 1 (CPA1) transporter (TC 2.A.36) family. Interacts with CHP1 and CHP2. Interacts with ARRB2; facilitates the endocytosis of SLC9A5 from the plasma membrane. Interacts with RACK1; this interaction positively regulates SLC9A5 activity and promotes SLC9A5 localization to focal adhesions. Interacts with SCAMP2; this interaction regulates SLC9A5 cell-surface targeting and SLC9A5 activity. Phosphorylated by PRKAA2; promotes its accumulation at the cell surface. Phosphorylated by CSNK2A1 in a manner favoring its beta-arrestin binding and endocytosis. In terms of tissue distribution, highly expressed in brain. Strongly expressed in the dentate gyrus.

It is found in the cell membrane. It localises to the recycling endosome membrane. The protein resides in the cell projection. The protein localises to the dendritic spine membrane. Its subcellular location is the synaptic cell membrane. It is found in the cell junction. It localises to the focal adhesion. It catalyses the reaction Na(+)(in) + H(+)(out) = Na(+)(out) + H(+)(in). Its function is as follows. Plasma membrane Na(+)/H(+) antiporter. Mediates the electroneutral exchange of intracellular H(+) ions for extracellular Na(+) in 1:1 stoichiometry. Responsible for regulating intracellular pH homeostasis, in particular in neural tissues. Acts as a negative regulator of dendritic spine growth. Plays a role in postsynaptic remodeling and signaling. Can also contribute to organellar pH regulation, with consequences for receptor tyrosine kinase trafficking. In Rattus norvegicus (Rat), this protein is Sodium/hydrogen exchanger 5 (Slc9a5).